A 486-amino-acid polypeptide reads, in one-letter code: Patatin-like phospholipase domain-containing protein 2 (486 aa).

At 1-8 (MFPRETKW) the chain is on the cytoplasmic side. The chain crosses the membrane as a helical span at residues 9 to 29 (NISFAGCGFLGVYHIGVASCL). Residues 10 to 179 (ISFAGCGFLG…SDNLPLYELK (170 aa)) form the PNPLA domain. The GXGXXG motif lies at 14 to 19 (GCGFLG). Topologically, residues 30 to 42 (REHAPFLVANATH) are extracellular. Asn-39 carries an N-linked (GlcNAc...) asparagine glycan. Residues 43–63 (IYGASAGALTATALVTGACLG) form a helical membrane-spanning segment. The GXSXG signature appears at 45-49 (GASAG). Catalysis depends on Ser-47, which acts as the Nucleophile. Over 64-137 (EAGANIIEVS…IISHFSSKDE (74 aa)) the chain is Cytoplasmic. Residue Lys-92 forms a Glycyl lysine isopeptide (Lys-Gly) (interchain with G-Cter in ubiquitin) linkage. The helical transmembrane segment at 138-158 (LIQANVCSTFIPVYCGLIPPT) threads the bilayer. At 159 to 331 (LQGVRYVDGG…TTLSNMLPVR (173 aa)) the chain is on the extracellular side. Asp-166 serves as the catalytic Proton acceptor. Positions 166–168 (DGG) match the DGA/G motif. Residues 332–352 (LATAMMVPYTLPLESAVSFTI) traverse the membrane as a helical segment. The Cytoplasmic portion of the chain corresponds to 353-486 (RLLEWLPDVP…PQDPPGLPPC (134 aa)). Ser-374 bears the Phosphoserine; in vitro mark. Ser-396 and Ser-406 each carry phosphoserine; by PKA. Ser-430 and Ser-468 each carry phosphoserine; in vitro. Over residues 465–476 (APASPTAADPAT) the composition is skewed to low complexity. Residues 465–486 (APASPTAADPATPQDPPGLPPC) are disordered. Over residues 477 to 486 (PQDPPGLPPC) the composition is skewed to pro residues.

In terms of assembly, interacts with ABHD5; this association stimulates PNPLA2 triglyceride hydrolase activity. Interacts with SERPINF1; this interaction stimulates the phospholipase A2 activity of PNPLA2. Despite a colocalization in lipid droplets, it probably does not interact with PLIN. Interacts with PLIN5; prevents interaction with ABHD5. Interacts with FAF2. Post-translationally, phosphorylation at Ser-406 by PKA is increased during fasting and moderate intensity exercise, and moderately increases lipolytic activity. Ubiquitinated by PEX2 in response to reactive oxygen species (ROS), leading to its degradation. Ubiquitination is stimulated by LDAH. Expressed at high levels in white and brown adipose tissue, and to a lesser degree in testis and cardiac muscle. Barely detected in liver, spleen, thymus, kidney, skeletal muscle, and brain. Among the white adipose depots, gonadal fat showed the highest level of expression compared with inguinal and renal white adipose tissues.

The protein localises to the lipid droplet. It localises to the cell membrane. The protein resides in the cytoplasm. It carries out the reaction a triacylglycerol + H2O = a diacylglycerol + a fatty acid + H(+). The catalysed reaction is a triacylglycerol + H2O = a 1,2-diacylglycerol + a fatty acid + H(+). It catalyses the reaction a triacylglycerol + H2O = a 1,3-diacylglycerol + a fatty acid + H(+). The enzyme catalyses a triacyl-sn-glycerol + H2O = a 2,3-diacyl-sn-glycerol + a fatty acid + H(+). It carries out the reaction a triacyl-sn-glycerol + H2O = a 1,3-diacyl-sn-glycerol + a fatty acid + H(+). The catalysed reaction is 1,2,3-tri-(9Z-octadecenoyl)-glycerol + H2O = 1,3-di-(9Z-octadecenoyl)-glycerol + (9Z)-octadecenoate + H(+). It catalyses the reaction 1,2,3-tri-(9Z)-hexadecenoylglycerol + H2O = 1,3-di-(9Z)-hexadecenoylglycerol + (9Z)-hexadecenoate + H(+). The enzyme catalyses 1,2,3-tri-(9Z,12Z)-octadecadienoylglycerol + H2O = 1,3-di-(9Z,12Z)-octadecadienoylglycerol + (9Z,12Z)-octadecadienoate + H(+). It carries out the reaction 1,2,3-tri-(9Z,12Z,15Z)-octadecatrienoylglycerol + H2O = 1,3-di-(9Z,12Z,15Z)-octadecatrienoylglycerol + (9Z,12Z,15Z)-octadecatrienoate + H(+). The catalysed reaction is 1,3-di-(9Z)-octadecenoyl-2-hexadecanoylglycerol + H2O = 1,3-di-(9Z-octadecenoyl)-glycerol + hexadecanoate + H(+). It catalyses the reaction 1,2-di-(9Z)-octadecenoyl-3-hexadecanoyl-sn-glycerol + H2O = 1-(9Z)-octadecenoyl-3-hexadecanoyl-sn-glycerol + (9Z)-octadecenoate + H(+). The enzyme catalyses 1-hexadecanoyl-2,3-di-(9Z)-octadecenoyl-sn-glycerol + H2O = 1-hexadecanoyl-3-(9Z)-octadecenoyl-sn-glycerol + (9Z)-octadecenoate + H(+). It carries out the reaction 1,2,3-tri-(9Z-octadecenoyl)-glycerol + H2O = 2,3-di-(9Z)-octadecenoyl-sn-glycerol + (9Z)-octadecenoate + H(+). The catalysed reaction is 1,2,3-tri-(9Z)-hexadecenoylglycerol + H2O = 2,3-di-(9Z)-hexadecenoyl-sn-glycerol + (9Z)-hexadecenoate + H(+). It catalyses the reaction 1,2,3-tri-(9Z,12Z)-octadecadienoylglycerol + H2O = 2,3-di-(9Z,12Z)-octadecadienoyl-sn-glycerol + (9Z,12Z)-octadecadienoate + H(+). The enzyme catalyses 1,2,3-tri-(9Z,12Z,15Z)-octadecatrienoylglycerol + H2O = 2,3-di-(9Z,12Z,15Z)-octadecatrienoyl-sn-glycerol + (9Z,12Z,15Z)-octadecatrienoate + H(+). It carries out the reaction 1,3-di-(9Z)-octadecenoyl-2-hexadecanoylglycerol + H2O = 2-hexadecanoyl-3-(9Z)-octadecenoyl-sn-glycerol + (9Z)-octadecenoate + H(+). The catalysed reaction is 1-hexadecanoyl-2,3-di-(9Z)-octadecenoyl-sn-glycerol + H2O = 2,3-di-(9Z)-octadecenoyl-sn-glycerol + hexadecanoate + H(+). It catalyses the reaction 1,2-di-(9Z)-octadecenoyl-3-hexadecanoyl-sn-glycerol + H2O = 2-(9Z-octadecenoyl)-3-hexadecanoyl-sn-glycerol + (9Z)-octadecenoate + H(+). The enzyme catalyses 1,2-di-(9Z-octadecenoyl)-glycerol + (9Z)-octadecenoate + H(+) = 1,2,3-tri-(9Z-octadecenoyl)-glycerol + H2O. It carries out the reaction a 1-acylglycerol + a 1,3-diacylglycerol = a triacylglycerol + glycerol. The catalysed reaction is a 1-acylglycerol + a 1,2-diacylglycerol = a triacylglycerol + glycerol. It catalyses the reaction 2 a 1-acylglycerol = a 1,2-diacylglycerol + glycerol. The enzyme catalyses a triacylglycerol + all-trans-retinol = an all-trans-retinyl ester + a diacylglycerol. It carries out the reaction 1-(9Z-octadecenoyl)-glycerol + 1,3-di-(9Z-octadecenoyl)-glycerol = 1,2,3-tri-(9Z-octadecenoyl)-glycerol + glycerol. The catalysed reaction is 1-(9Z-octadecenoyl)-glycerol + 1,2-di-(9Z-octadecenoyl)-glycerol = 1,2,3-tri-(9Z-octadecenoyl)-glycerol + glycerol. It catalyses the reaction 2 1-(9Z-octadecenoyl)-glycerol = 1,2-di-(9Z-octadecenoyl)-glycerol + glycerol. The enzyme catalyses 1,2,3-tri-(9Z-octadecenoyl)-glycerol + all-trans-retinol = all-trans-retinyl 9Z-octadecenoate + di-(9Z)-octadecenoylglycerol. It carries out the reaction a 1,2-diacyl-sn-glycero-3-phosphocholine + H2O = a 1-acyl-sn-glycero-3-phosphocholine + a fatty acid + H(+). The catalysed reaction is 1,2,3-tri-(9Z-octadecenoyl)-glycerol + 9-hydroxy-octadecanoate = 9-(9Z-octadecenoyloxy)-octadecanoate + 2,3-di-(9Z)-octadecenoyl-sn-glycerol. It catalyses the reaction 1-hexadecanoyl-2,3-di-(9Z)-octadecenoyl-sn-glycerol + 9-hydroxy-octadecanoate = 9-hexadecanoyloxy-octadecanoate + 2,3-di-(9Z)-octadecenoyl-sn-glycerol. The enzyme catalyses 1,2,3-tri-(10Z)-heptadecenoylglycerol + 9-hydroxy-octadecanoate = 2,3-di-(10Z-heptadecenoyl)-sn-glycerol + 9-(10Z-heptadecenoyloxy)-octadecanoate. It carries out the reaction 1,2,3-tri-(9Z,12Z)-octadecadienoylglycerol + 9-hydroxy-octadecanoate = 2,3-di-(9Z,12Z)-octadecadienoyl-sn-glycerol + 9-(9Z,12Z-octadecadienoyloxy)-octadecanoate. The catalysed reaction is 1,2,3-tri-(9Z)-hexadecenoylglycerol + 9-hydroxy-octadecanoate = 2,3-di-(9Z)-hexadecenoyl-sn-glycerol + 9-(9Z-hexadecenoyloxy)-octadecanoate. It catalyses the reaction 9-hydroxy-octadecanoate + 1,2-di-(9Z-octadecenoyl)-sn-glycerol = 9-(9Z-octadecenoyloxy)-octadecanoate + 2-(9Z-octadecenoyl)-glycerol. The enzyme catalyses 1-hexadecanoyl-2,3-di-(9Z)-octadecenoyl-sn-glycerol + 9-hydroxy-octadecanoate = 1-hexadecanoyl-3-(9Z)-octadecenoyl-sn-glycerol + 9-(9Z-octadecenoyloxy)-octadecanoate. The protein operates within glycerolipid metabolism; triacylglycerol degradation. Its activity is regulated as follows. Stimulated by PKA-dependent PLIN phosphorylation. In terms of biological role, catalyzes the initial step in triglyceride hydrolysis in adipocyte and non-adipocyte lipid droplets. Exhibits a strong preference for the hydrolysis of long-chain fatty acid esters at the sn-2 position of the glycerol backbone and acts coordinately with LIPE/HLS and DGAT2 within the lipolytic cascade. Also possesses acylglycerol transacylase and phospholipase A2 activities. Transfers fatty acid from triglyceride to retinol, hydrolyzes retinylesters, and generates 1,3-diacylglycerol from triglycerides. Regulates adiposome size and may be involved in the degradation of adiposomes. Catalyzes the formation of an ester bond between hydroxy fatty acids and fatty acids derived from triglycerides or diglycerides to generate fatty acid esters of hydroxy fatty acids (FAHFAs) in adipocytes. Acts antagonistically with LDAH in regulation of cellular lipid stores. Inhibits LDAH-stimulated lipid droplet fusion. May play an important role in energy homeostasis. May play a role in the response of the organism to starvation, enhancing hydrolysis of triglycerides and providing free fatty acids to other tissues to be oxidized in situations of energy depletion. This chain is Patatin-like phospholipase domain-containing protein 2, found in Mus musculus (Mouse).